The following is a 215-amino-acid chain: Large ribosomal subunit protein uL4 (215 aa).

Positions 43 to 101 (HQRQGTSKTKERGEVRGSGRKLYRQKGTGNARVGDAQSPIRRGGGRAHGARPRDYAHDL) are disordered. Positions 50-59 (KTKERGEVRG) are enriched in basic and acidic residues.

Belongs to the universal ribosomal protein uL4 family. Part of the 50S ribosomal subunit.

One of the primary rRNA binding proteins, this protein initially binds near the 5'-end of the 23S rRNA. It is important during the early stages of 50S assembly. It makes multiple contacts with different domains of the 23S rRNA in the assembled 50S subunit and ribosome. Its function is as follows. Forms part of the polypeptide exit tunnel. The chain is Large ribosomal subunit protein uL4 from Salinibacter ruber (strain DSM 13855 / M31).